Here is a 163-residue protein sequence, read N- to C-terminus: Endoribonuclease YbeY (163 aa).

3 residues coordinate Zn(2+): His121, His125, and His131.

This sequence belongs to the endoribonuclease YbeY family. It depends on Zn(2+) as a cofactor.

It localises to the cytoplasm. Its function is as follows. Single strand-specific metallo-endoribonuclease involved in late-stage 70S ribosome quality control and in maturation of the 3' terminus of the 16S rRNA. The polypeptide is Endoribonuclease YbeY (Synechococcus sp. (strain JA-3-3Ab) (Cyanobacteria bacterium Yellowstone A-Prime)).